The sequence spans 1502 residues: DNA-directed RNA polymerase subunit beta' (1502 aa).

Positions 60, 62, 75, and 78 each coordinate Zn(2+). Residues 265 to 293 form a disordered region; that stretch reads RKQRDLEDAEQLTGAERERKEYEASQERE. Residues 279–293 show a composition bias toward basic and acidic residues; sequence AERERKEYEASQERE. Mg(2+)-binding residues include Asp-626, Asp-628, and Asp-630. Zn(2+)-binding residues include Cys-1002, Cys-1075, Cys-1082, and Cys-1085. The interval 1472–1502 is disordered; the sequence is SDDNGDEVGKNGEFADETPFTGDSDDRDNEI.

It belongs to the RNA polymerase beta' chain family. As to quaternary structure, the RNAP catalytic core consists of 2 alpha, 1 beta, 1 beta' and 1 omega subunit. When a sigma factor is associated with the core the holoenzyme is formed, which can initiate transcription. It depends on Mg(2+) as a cofactor. Zn(2+) is required as a cofactor.

The enzyme catalyses RNA(n) + a ribonucleoside 5'-triphosphate = RNA(n+1) + diphosphate. Its function is as follows. DNA-dependent RNA polymerase catalyzes the transcription of DNA into RNA using the four ribonucleoside triphosphates as substrates. This Roseiflexus castenholzii (strain DSM 13941 / HLO8) protein is DNA-directed RNA polymerase subunit beta'.